We begin with the raw amino-acid sequence, 541 residues long: MPRRKQSHPQPVKCEGVKVDTEDSFDEGPGALVLESDLLLGQDLEFEEEEEEEEGDGHNDQLMGFERDSEGDSQGARPGLPYGLSDDESGGGRALSAESEVEEPARGPGEARGERPGPACQLCGGPTGEGPCCGAGGPGGGPPLPPRLLYSCRLCAFVSHYSSHLKRHMQTHSGEKPFRCGRCPYASAQLVNLTRHTRTHTGEKPYRCPHCPFACSSLGNLRRHQRTHTGPPTPPCPTCGFRCCAPRPTRPPSPTEQEGTMPRRSEDALILPDLSLHVPPGGTSFLPDCGQLRGEGEGLCGTGSEPLPELLFPWTCRGCGQELEEGEGSRLGTAMCGRCMRGESGGGGSGGPQGPSDKGFACSLCPFATHYPNHLARHMKTHSGEKPFRCARCPYASAHLDNLKRHQRVHTGEKPYKCPLCPYACGNLANLKRHGRIHSGDKPFRCSLCNYSCNQSMNLKRHMLRHTGEKPFRCATCAYTTGHWDNYKRHQKVHGHGGAGGPGLSAPEGWAPPHSPPSVLSTRGSAALGATGSRALHTDSP.

Residues 1 to 120 (MPRRKQSHPQ…ARGERPGPAC (120 aa)) are disordered. Acidic residues predominate over residues 44–55 (LEFEEEEEEEEG). Phosphoserine occurs at positions 85 and 96. Positions 103–115 (EPARGPGEARGER) are enriched in basic and acidic residues. 8 C2H2-type zinc fingers span residues 150–172 (YSCR…MQTH), 178–200 (FRCG…TRTH), 206–228 (YRCP…QRTH), 360–382 (FACS…MKTH), 388–410 (FRCA…QRVH), 416–438 (YKCP…GRIH), 444–466 (FRCS…MLRH), and 472–494 (FRCA…QKVH). The interval 492-541 (KVHGHGGAGGPGLSAPEGWAPPHSPPSVLSTRGSAALGATGSRALHTDSP) is disordered.

This sequence belongs to the krueppel C2H2-type zinc-finger protein family. In terms of assembly, binds DNA. Can associate with the proximal promoter regions of PAX6 and SP4, and their known targets including ARR3, RHO, OPN1MW2 and OPN1SW.

Its subcellular location is the nucleus. Transcriptional regulator that plays a role in retinal development and maintenance. The protein is Zinc finger protein 513 (Znf513) of Rattus norvegicus (Rat).